We begin with the raw amino-acid sequence, 338 residues long: Microtubule-associated protein RP/EB family member 2 (338 aa).

Positions 1–21 (MPGPTQALSPNGENNNDIIQD) are disordered. Residues 57–159 (TMSRHDIIAW…FIQWFKKFFD (103 aa)) form the Calponin-homology (CH) domain. 2 disordered regions span residues 171–241 (EARQ…KDLE) and 300–338 (SEEH…FHFV). The span at 200–234 (SPTAGAAKSSPASKPGSTPSRPSSAKKAAPSSSAS) shows a compositional bias: low complexity. The 71-residue stretch at 236–306 (SDKDLETQVI…LYASEEHESH (71 aa)) folds into the EB1 C-terminal domain. A compositionally biased stretch (basic and acidic residues) spans 300 to 327 (SEEHESHTEEHEGEEQVHEQPSSRRSTD). Low complexity predominate over residues 328-338 (SRSVSDNFHFV).

This sequence belongs to the MAPRE family.

It is found in the cytoplasm. The protein localises to the cytoskeleton. In terms of biological role, may be involved in microtubule polymerization, and spindle function by stabilizing microtubules and anchoring them at centrosomes. The protein is Microtubule-associated protein RP/EB family member 2 (MAPRE2) of Gallus gallus (Chicken).